The chain runs to 327 residues: DNA-directed RNA polymerase subunit alpha (327 aa).

Residues 1–231 (MIYQMQMPAK…DHVTFFANFS (231 aa)) are alpha N-terminal domain (alpha-NTD). Residues 252-327 (MRRLFHTKIE…GMDITKYQMK (76 aa)) form an alpha C-terminal domain (alpha-CTD) region.

Belongs to the RNA polymerase alpha chain family. In terms of assembly, homodimer. The RNAP catalytic core consists of 2 alpha, 1 beta, 1 beta' and 1 omega subunit. When a sigma factor is associated with the core the holoenzyme is formed, which can initiate transcription.

The enzyme catalyses RNA(n) + a ribonucleoside 5'-triphosphate = RNA(n+1) + diphosphate. Functionally, DNA-dependent RNA polymerase catalyzes the transcription of DNA into RNA using the four ribonucleoside triphosphates as substrates. The protein is DNA-directed RNA polymerase subunit alpha of Pelodictyon phaeoclathratiforme (strain DSM 5477 / BU-1).